Here is a 424-residue protein sequence, read N- to C-terminus: O-methyltransferase aunD (424 aa).

An S-adenosyl-L-methionine-binding site is contributed by D275. Catalysis depends on H326, which acts as the Proton acceptor.

Belongs to the class I-like SAM-binding methyltransferase superfamily. Cation-independent O-methyltransferase family.

The protein operates within secondary metabolite biosynthesis. In terms of biological role, O-methyltransferase; part of the gene cluster that mediates the biosynthesis of aurasperone B, a dimeric gamma-naphthopyrone. The first step in the biosynthesis of aurasperone B is the production of gamma-naphthopyrone precursor YWA1 by the non-reducing polyketide synthase albA, via condensation of one acetyl-CoA starter unit with 6 malonyl-CoA units. YWA1 is then methylated by aunE at position C-6 to yield foncesin which is further methylated at position C-8 by aunD to produce fonsecin B. A key enzyme in the biosynthetic pathway is the cytochrome P450 monooxygenase aunB which catalyzes the oxidative dimerization of fonsecin B to aurasperone B. AunB also catalyzes the oxidative dimerization of rubrofusarin B into aurasperone A. The protein is O-methyltransferase aunD of Aspergillus niger (strain ATCC MYA-4892 / CBS 513.88 / FGSC A1513).